The following is a 37-amino-acid chain: Large ribosomal subunit protein bL36 (37 aa).

This sequence belongs to the bacterial ribosomal protein bL36 family.

The protein is Large ribosomal subunit protein bL36 of Dictyoglomus thermophilum (strain ATCC 35947 / DSM 3960 / H-6-12).